Reading from the N-terminus, the 358-residue chain is Na(+)/H(+) exchange regulatory cofactor NHE-RF1 (358 aa).

Position 2 is an N-acetylserine (Ser2). A phosphoserine mark is found at Ser2 and Ser46. The PDZ 1 domain maps to 14-94 (LCCLEKGPNG…AVRLLVVDPD (81 aa)). Residues 114–134 (QAGPEQAGPPAAPGEQGPAGE) show a composition bias toward low complexity. Residues 114-151 (QAGPEQAGPPAAPGEQGPAGENEPREVEKSHPERRELR) form a disordered region. Basic and acidic residues predominate over residues 135-151 (NEPREVEKSHPERRELR). The PDZ 2 domain occupies 154–234 (LCAMKKGPNG…EAKLLVVDKE (81 aa)). Positions 247-358 (SSEHLNGPLP…SEKKELFSNL (112 aa)) are disordered. The segment covering 272-290 (LAPAASESPRPALARSASS) has biased composition (low complexity). Residues Ser279, Ser289, and Ser290 each carry the phosphoserine modification. Residue Thr292 is modified to Phosphothreonine. Ser293, Ser298, and Ser301 each carry phosphoserine. Low complexity predominate over residues 308-327 (TAPSSTSSSSDPILDFSISL). Over residues 348–358 (WSEKKELFSNL) the composition is skewed to basic and acidic residues.

In terms of assembly, homodimer, and heterodimer with NHERF2. Binds the N-termini of EZR, RDX and MSN. Binds the C-termini of PDGFRA, PDGFRB, ADRB2, NOS2 and CFTR. Binds ARHGAP17, EPI64, RACK1, OPRK1, GNAQ, CTNNB1 and PLCB3. Binds PDZK1. Interacts with CLCN3. Binds the C-terminus of PAG1. In resting T-cells, part of a PAG1-NHERF1-MSN complex which is disrupted upon TCR activation. Forms a complex with CFTR and SLC4A7. Forms a complex with SLC4A7 and ATP6V1B1. Interacts with TRPC4 (via the PDZ-binding domain). Directly interacts with HTR4. Interacts (via the PDZ 1 domain) with PODXL (via the C-terminal PDZ-binding motif DTHL); interaction is not detected in glomerular epithelium cells. Interacts (via the PDZ 1 domain) with PODXL (via the C-terminal PDZ-binding motif DTHL); the interaction take place early in the secretory pathway and is necessary for its apical membrane sorting. Interacts with SLC26A3. Interacts with MCC. Interacts with SLC34A1. Interacts (via the PDZ domains) with SLC26A6 isoform 4 and isoform 5. Interacts (via PDZ domains) with ACE2 (via PDZ-binding motif); the interaction may enhance ACE2 membrane residence. In terms of processing, phosphorylated on serine residues. Detected in ileum, duodenum and in kidney, where it is found in the glomerulus, the proximal tubule, the thick ascending limb of Henle's loop and the cortical collecting duct.

The protein localises to the cytoplasm. It is found in the apical cell membrane. The protein resides in the cell projection. It localises to the filopodium. Its subcellular location is the ruffle. The protein localises to the microvillus. It is found in the endomembrane system. In terms of biological role, scaffold protein that connects plasma membrane proteins with members of the ezrin/moesin/radixin family and thereby helps to link them to the actin cytoskeleton and to regulate their surface expression. Necessary for recycling of internalized ADRB2. Was first known to play a role in the regulation of the activity and subcellular location of SLC9A3. Necessary for cAMP-mediated phosphorylation and inhibition of SLC9A3. Involved in sperm capacitation. May participate in the regulation of the chloride and bicarbonate homeostasis in spermatozoa. May enhance Wnt signaling. May participate in HTR4 targeting to microvilli. Involved in the regulation of phosphate reabsorption in the renal proximal tubules. This Oryctolagus cuniculus (Rabbit) protein is Na(+)/H(+) exchange regulatory cofactor NHE-RF1 (NHERF1).